A 291-amino-acid chain; its full sequence is MASKQLKLVIITGMSGAGKTVAMQSLEDLGYFCVDNLPPSLLPKFWELMKESDKMDKIALVMDLRGREFFDSIEPALDELDNTNFITTKILFLEADDKVLVSRYKETRRHHPLEPNGSVLDGINAERELLSDLKGRSQLVINTSNMAPRELRERINNEFQTEDKDVFNVQLMSFGFKYGIPIDADLVFDVRFLPNPHYIDKMRPLTGLDKDVYEYVMKWPETGAFLDKLIDLLMFTLPFYKREGKTQLVIAIGCTGGQHRSVALTEYVGKAIQQKYETTISHRDMKRRKGR.

13 to 20 (GMSGAGKT) is a binding site for ATP. Position 63–66 (63–66 (DLRG)) interacts with GTP.

It belongs to the RapZ-like family.

Functionally, displays ATPase and GTPase activities. The polypeptide is Nucleotide-binding protein lwe2422 (Listeria welshimeri serovar 6b (strain ATCC 35897 / DSM 20650 / CCUG 15529 / CIP 8149 / NCTC 11857 / SLCC 5334 / V8)).